Consider the following 384-residue polypeptide: MQTGHPADGVYLGLMSGTSMDGVDGITVRFETGKPPAVLSEAFVGFADTLRDSLFALQQPGDDEIEREALAANALAARYAACCHEMLRAAGLSPDDVRALGVHGQTVRHRPERGYTRQINNAALLAELTRIDVIADFRSRDVAAGGQGAPLVPAFHATMFGSPDETRVVCNLGGISNITILPAARDGRDERNDAVRGHDCGPANALIDAWALRHLKRPFDEGGRFAARGTVDETLLAALLDEPYFRQSAPKSTGRDLFNADWLDAKLAGFRGLAPEDVQATLTALTAASVADEIARHAHDCRAVYVCGGGARNPVLLDALATALAARGLDAPVATTAALGVPPQQVESLAFAWLAYRFNARAPGNVSAVTGAAGERVLGALYPR.

17–24 (GTSMDGVD) serves as a coordination point for ATP.

This sequence belongs to the anhydro-N-acetylmuramic acid kinase family.

The catalysed reaction is 1,6-anhydro-N-acetyl-beta-muramate + ATP + H2O = N-acetyl-D-muramate 6-phosphate + ADP + H(+). It functions in the pathway amino-sugar metabolism; 1,6-anhydro-N-acetylmuramate degradation. Its pathway is cell wall biogenesis; peptidoglycan recycling. Functionally, catalyzes the specific phosphorylation of 1,6-anhydro-N-acetylmuramic acid (anhMurNAc) with the simultaneous cleavage of the 1,6-anhydro ring, generating MurNAc-6-P. Is required for the utilization of anhMurNAc either imported from the medium or derived from its own cell wall murein, and thus plays a role in cell wall recycling. In Burkholderia thailandensis (strain ATCC 700388 / DSM 13276 / CCUG 48851 / CIP 106301 / E264), this protein is Anhydro-N-acetylmuramic acid kinase.